A 319-amino-acid chain; its full sequence is Chromoplast-specific carotenoid-associated protein C1, chromoplastic (319 aa).

The transit peptide at 1–55 (MTSIAFWNAFTVNPFPAAARRSPPPLTPFTSGALSPARKPRILEISHPRTLPSFR) directs the protein to the chromoplast.

This sequence belongs to the PAP/fibrillin family. In terms of tissue distribution, expressed in flower buds and floral lip tissues. Not detected in roots and leaves. Specifically expressed in conical papillate cells of adaxial epidermis of lip tissues.

The protein resides in the plastid. It is found in the chromoplast. In terms of biological role, may be involved in carotenoid sequestration within chromoplasts. The sequence is that of Chromoplast-specific carotenoid-associated protein C1, chromoplastic (CHRC1) from Oncidium hybrid cultivar (Orchid).